Reading from the N-terminus, the 288-residue chain is 18S rRNA aminocarboxypropyltransferase (288 aa).

Positions 43, 91, 114, and 129 each coordinate S-adenosyl-L-methionine. Residues 209-221 (IWSAGNLNHKPTL) are compositionally biased toward polar residues. Residues 209-267 (IWSAGNLNHKPTLNTSSTHSNSEESRSPLHEPSEASLAHDEHSIPTDDNEETLTNLQAN) are disordered. The segment covering 229-253 (NSEESRSPLHEPSEASLAHDEHSIP) has biased composition (basic and acidic residues).

The protein belongs to the TDD superfamily. TSR3 family.

It localises to the cytoplasm. Its subcellular location is the nucleus. It catalyses the reaction an N(1)-methylpseudouridine in rRNA + S-adenosyl-L-methionine = N(1)-methyl-N(3)-[(3S)-3-amino-3-carboxypropyl]pseudouridine in rRNA + S-methyl-5'-thioadenosine + H(+). It carries out the reaction N(1)-methylpseudouridine(1191) in yeast 18S rRNA + S-adenosyl-L-methionine = N(1)-methyl-N(3)-[(3S)-3-amino-3-carboxypropyl]pseudouridine(1191) in yeast 18S rRNA + S-methyl-5'-thioadenosine + H(+). In terms of biological role, aminocarboxypropyltransferase that catalyzes the aminocarboxypropyl transfer on pseudouridine at position 1191 (Psi1191) in 18S rRNA. It constitutes the last step in biosynthesis of the hypermodified N1-methyl-N3-(3-amino-3-carboxypropyl) pseudouridine (m1acp3-Psi) conserved in eukaryotic 18S rRNA. Required for processing 35S pre-rRNA at site D. In Schizosaccharomyces pombe (strain 972 / ATCC 24843) (Fission yeast), this protein is 18S rRNA aminocarboxypropyltransferase.